A 175-amino-acid polypeptide reads, in one-letter code: Transcription factor E (175 aa).

The HTH TFE/IIEalpha-type domain occupies 8 to 90 (NDPVIQKYLH…LWTFQYENIP (83 aa)).

It belongs to the TFE family. Monomer. Interaction with RNA polymerase subunits RpoF and RpoE is necessary for Tfe stimulatory transcription activity. Able to interact with Tbp and RNA polymerase in the absence of DNA promoter. Interacts both with the preinitiation and elongation complexes.

Transcription factor that plays a role in the activation of archaeal genes transcribed by RNA polymerase. Facilitates transcription initiation by enhancing TATA-box recognition by TATA-box-binding protein (Tbp), and transcription factor B (Tfb) and RNA polymerase recruitment. Not absolutely required for transcription in vitro, but particularly important in cases where Tbp or Tfb function is not optimal. It dynamically alters the nucleic acid-binding properties of RNA polymerases by stabilizing the initiation complex and destabilizing elongation complexes. Seems to translocate with the RNA polymerase following initiation and acts by binding to the non template strand of the transcription bubble in elongation complexes. The protein is Transcription factor E of Natronomonas pharaonis (strain ATCC 35678 / DSM 2160 / CIP 103997 / JCM 8858 / NBRC 14720 / NCIMB 2260 / Gabara) (Halobacterium pharaonis).